Reading from the N-terminus, the 399-residue chain is Lymphoid enhancer-binding factor 1 (399 aa).

A compositionally biased stretch (gly residues) spans 1-14 (MPQLSGGGGGGGGD). The tract at residues 1-62 (MPQLSGGGGG…IKSSLVNESE (62 aa)) is CTNNB1-binding. The interval 1 to 104 (MPQLSGGGGG…KHPDGGLYNK (104 aa)) is disordered. Basic and acidic residues-rich tracts occupy residues 24–45 (IPFKDEGDPQKEKIFAEISHPE) and 82–98 (PYHDKAREHPDDGKHPD). Residue lysine 27 forms a Glycyl lysine isopeptide (Lys-Gly) (interchain with G-Cter in SUMO) linkage. The residue at position 132 (serine 132) is a Phosphoserine. The residue at position 155 (threonine 155) is a Phosphothreonine; by NLK. Serine 166 is modified (phosphoserine; by NLK). 2 disordered regions span residues 166 to 192 (SPGSHPSHIPSDVNSKQGMSRHPPAPD) and 268 to 298 (VKQEHPHTDSDLMHVKPQHEQRKEQEPKRPH). A Glycyl lysine isopeptide (Lys-Gly) (interchain with G-Cter in SUMO) cross-link involves residue lysine 269. Residues 269 to 296 (KQEHPHTDSDLMHVKPQHEQRKEQEPKR) are compositionally biased toward basic and acidic residues. Positions 299-367 (IKKPLNAFML…LHMQLYPGWS (69 aa)) form a DNA-binding region, HMG box. A disordered region spans residues 369–399 (RDNYGKKKKRKREKLQESASGTGPRMTAAYI).

The protein belongs to the TCF/LEF family. As to quaternary structure, binds the armadillo repeat of CTNNB1 and forms a stable complex. Interacts with EP300, TLE1 and PIASG. Binds ALYREF/THOC4, MDFI and MDFIC. Interacts with NLK. Interacts with DAZAP2. In terms of processing, phosphorylated at Thr-155 and/or Ser-166 by NLK. Phosphorylation by NLK at these sites represses LEF1-mediated transcriptional activation of target genes of the canonical Wnt signaling pathway. Detected in thymus. Not detected in normal colon, but highly expressed in colon cancer biopsies and colon cancer cell lines. Expressed in several pancreatic tumors and weakly expressed in normal pancreatic tissue. Isoforms 1 and 5 are detected in several pancreatic cell lines.

The protein resides in the nucleus. Its function is as follows. Transcription factor that binds DNA in a sequence-specific manner. Participates in the Wnt signaling pathway. Activates transcription of target genes in the presence of CTNNB1 and EP300. PIAG antagonizes both Wnt-dependent and Wnt-independent activation by LEF1. TLE1, TLE2, TLE3 and TLE4 repress transactivation mediated by LEF1 and CTNNB1. Regulates T-cell receptor alpha enhancer function. Required for IL17A expressing gamma-delta T-cell maturation and development, via binding to regulator loci of BLK to modulate expression. Acts as a positive regulator of odontoblast differentiation during mesenchymal tooth germ formation, expression is repressed during the bell stage by MSX1-mediated inhibition of CTNNB1 signaling. May play a role in hair cell differentiation and follicle morphogenesis. Transcriptionally activates MYC and CCND1 expression and enhances proliferation of pancreatic tumor cells. In terms of biological role, lacks the CTNNB1 interaction domain and may therefore be an antagonist for Wnt signaling. Functionally, transcriptionally activates the fibronectin promoter, binds to and represses transcription from the E-cadherin promoter in a CTNNB1-independent manner, and is involved in reducing cellular aggregation and increasing cell migration of pancreatic cancer cells. In Homo sapiens (Human), this protein is Lymphoid enhancer-binding factor 1.